Here is a 46-residue protein sequence, read N- to C-terminus: Amine oxidase [flavin-containing] A (46 aa).

The protein belongs to the flavin monoamine oxidase family. Monomer, homo- or heterodimer (containing two subunits of similar size). Each subunit contains a covalently bound flavin. Enzymatically active as monomer. FAD serves as cofactor.

It is found in the mitochondrion outer membrane. The enzyme catalyses a secondary aliphatic amine + O2 + H2O = a primary amine + an aldehyde + H2O2. It catalyses the reaction a primary methyl amine + O2 + H2O = an aldehyde + H2O2 + NH4(+). It carries out the reaction (R)-adrenaline + O2 + H2O = (R)-3,4-dihydroxymandelaldehyde + methylamine + H2O2. The catalysed reaction is dopamine + O2 + H2O = 3,4-dihydroxyphenylacetaldehyde + H2O2 + NH4(+). The enzyme catalyses tyramine + O2 + H2O = (4-hydroxyphenyl)acetaldehyde + H2O2 + NH4(+). It catalyses the reaction (R)-noradrenaline + O2 + H2O = (R)-3,4-dihydroxymandelaldehyde + H2O2 + NH4(+). It carries out the reaction serotonin + O2 + H2O = (5-hydroxyindol-3-yl)acetaldehyde + H2O2 + NH4(+). The catalysed reaction is kynuramine + O2 + H2O = 3-(2-aminophenyl)-3-oxopropanal + H2O2 + NH4(+). The enzyme catalyses tryptamine + O2 + H2O = indole-3-acetaldehyde + H2O2 + NH4(+). It catalyses the reaction 2-phenylethylamine + O2 + H2O = 2-phenylacetaldehyde + H2O2 + NH4(+). Its function is as follows. Catalyzes the oxidative deamination of primary and some secondary amine such as neurotransmitters, with concomitant reduction of oxygen to hydrogen peroxide and has important functions in the metabolism of neuroactive and vasoactive amines in the central nervous system and peripheral tissues. Preferentially oxidizes serotonin. Also catalyzes the oxidative deamination of kynuramine to 3-(2-aminophenyl)-3-oxopropanal that can spontaneously condense to 4-hydroxyquinoline. This chain is Amine oxidase [flavin-containing] A, found in Ovis aries (Sheep).